The primary structure comprises 419 residues: Histidine--tRNA ligase (419 aa).

Belongs to the class-II aminoacyl-tRNA synthetase family. In terms of assembly, homodimer.

The protein resides in the cytoplasm. The enzyme catalyses tRNA(His) + L-histidine + ATP = L-histidyl-tRNA(His) + AMP + diphosphate + H(+). In Synechococcus sp. (strain JA-3-3Ab) (Cyanobacteria bacterium Yellowstone A-Prime), this protein is Histidine--tRNA ligase.